A 78-amino-acid chain; its full sequence is Large ribosomal subunit protein bL28 (78 aa).

Belongs to the bacterial ribosomal protein bL28 family.

The polypeptide is Large ribosomal subunit protein bL28 (Bordetella avium (strain 197N)).